The following is a 99-amino-acid chain: Putative septation protein SpoVG (99 aa).

It belongs to the SpoVG family.

Its function is as follows. Could be involved in septation. The protein is Putative septation protein SpoVG of Onion yellows phytoplasma (strain OY-M).